Here is a 383-residue protein sequence, read N- to C-terminus: F-box/kelch-repeat protein At1g16250 (383 aa).

The region spanning 7 to 54 (SIIPGLPDDLALRCIAKLSHGYHGVLECVSRGWRDLVRGADYSCYKAR) is the F-box domain. 5 Kelch repeats span residues 50–103 (CYKA…GFAC), 109–165 (CLLV…SVSG), 166–214 (KVYV…SYRG), 216–263 (FHVL…VMKN), and 318–377 (ELYV…CVSL).

This Arabidopsis thaliana (Mouse-ear cress) protein is F-box/kelch-repeat protein At1g16250.